The following is a 511-amino-acid chain: Cobyric acid synthase (511 aa).

In terms of domain architecture, GATase cobBQ-type spans 251–443; that stretch reads LLDIAIICLP…IHGIFDNDVF (193 aa). Cys-332 acts as the Nucleophile in catalysis. His-435 is a catalytic residue.

The protein belongs to the CobB/CobQ family. CobQ subfamily.

It participates in cofactor biosynthesis; adenosylcobalamin biosynthesis. Catalyzes amidations at positions B, D, E, and G on adenosylcobyrinic A,C-diamide. NH(2) groups are provided by glutamine, and one molecule of ATP is hydrogenolyzed for each amidation. This chain is Cobyric acid synthase, found in Listeria monocytogenes serotype 4b (strain CLIP80459).